A 253-amino-acid polypeptide reads, in one-letter code: Adenylate kinase (253 aa).

15–20 (GSGKGT) contacts ATP. The NMP stretch occupies residues 35 to 64 (SSGDLLRNAVSQNTPLGQEIKSYLDQGKLL). AMP-binding positions include serine 36, arginine 41, 62-64 (KLL), 103-106 (GFPR), and glutamine 110. The segment at 143 to 176 (SRYICPSCQGIYNKQQGFSRCPKCLVELTRRSDD) is LID. Arginine 144 serves as a coordination point for ATP. Residues cysteine 147 and cysteine 150 each contribute to the Zn(2+) site. 153–154 (IY) serves as a coordination point for ATP. Cysteine 163 and cysteine 166 together coordinate Zn(2+). Residues arginine 173 and arginine 184 each contribute to the AMP site. Residue alanine 212 participates in ATP binding.

Belongs to the adenylate kinase family. Monomer.

The protein localises to the cytoplasm. It carries out the reaction AMP + ATP = 2 ADP. It functions in the pathway purine metabolism; AMP biosynthesis via salvage pathway; AMP from ADP: step 1/1. Catalyzes the reversible transfer of the terminal phosphate group between ATP and AMP. Plays an important role in cellular energy homeostasis and in adenine nucleotide metabolism. The chain is Adenylate kinase from Chlamydia muridarum (strain MoPn / Nigg).